A 760-amino-acid polypeptide reads, in one-letter code: Transmembrane channel-like protein 1 (760 aa).

The segment at 1 to 80 is disordered; that stretch reads MSPKKVQIKV…RRRRLKRGAE (80 aa). Residues 1-182 are Cytoplasmic-facing; the sequence is MSPKKVQIKV…KIKAIESQFG (182 aa). Residues 13-29 are compositionally biased toward acidic residues; sequence KEDETEESSSEEEEEVE. The segment covering 30–39 has biased composition (basic and acidic residues); it reads DKLPRRESLR. Serine 37 is subject to Phosphoserine. Threonine 45 is subject to Phosphothreonine. Residues 50–61 are compositionally biased toward acidic residues; that stretch reads NEDDPEPEPEDE. A Phosphoserine modification is found at serine 128. The chain crosses the membrane as a helical span at residues 183–220; it reads SSVASYFLFLRWMYGVNMVLFILTFSLIMLPEYLWGLP. Residues 221 to 271 are Extracellular-facing; sequence YGSLPRKTVPRAEEASAANFGVLYDFNGLAQYSVLFYGYYDNKRTIGWMNF. Residues 272–303 traverse the membrane as a helical segment; sequence RLPLSYFLVGIMCIGYSFLVVLKAMTKNIGDD. Topologically, residues 304–359 are cytoplasmic; sequence GGGDDNTFNFSWKVFTSWDYLIGNPETADNKFNSITMNFKEAITEEKAAQVEENVH. Residue serine 314 is modified to Phosphoserine. A helical transmembrane segment spans residues 360-390; the sequence is LIRFLRFLANFFVFLTLGGSGYLIFWAVKRS. Residues 391-402 lie on the Extracellular side of the membrane; sequence QEFAQQDPDTLG. Threonine 400 is modified (phosphothreonine). The helical transmembrane segment at 403 to 430 threads the bilayer; the sequence is WWEKNEMNMVMSLLGMFCPTLFDLFAEL. Over 431–434 the chain is Cytoplasmic; that stretch reads EDYH. The helical transmembrane segment at 435–469 threads the bilayer; the sequence is PLIALKWLLGRIFALLLGNLYVFILALMDEINNKI. Topologically, residues 470–515 are extracellular; sequence EEEKLVKANITLWEANMIKAYNASFSENSTGPPFFVHPADVPRGPC. The helical transmembrane segment at 516 to 553 threads the bilayer; it reads WETMVGQEFVRLTVSDVLTTYVTILIGDFLRACFVRFC. Residues 554–572 are Cytoplasmic-facing; the sequence is NYCWCWDLEYGYPSYTEFD. Residues 573 to 593 form a helical membrane-spanning segment; that stretch reads ISGNVLALIFNQGMIWMGSFF. Over 594–596 the chain is Extracellular; the sequence is APS. The helical transmembrane segment at 597–619 threads the bilayer; the sequence is LPGINILRLHTSMYFQCWAVMCC. Residues 620 to 633 are Cytoplasmic-facing; that stretch reads NVPEARVFKASRSN. The chain crosses the membrane as a helical span at residues 634–657; that stretch reads NFYLGMLLLILFLSTMPVLYMIVS. Residues 658–700 lie on the Extracellular side of the membrane; the sequence is LPPSFDCGPFSGKNRMFEVIGETLEHDFPSWMAKILRQLSNPG. Residues 701-734 form a helical membrane-spanning segment; the sequence is LVIAVILVMVLAIYYLNATAKGQKAANLDLKKKM. The Cytoplasmic segment spans residues 735-760; sequence KMQALENKMRNKKMAAARAAAAAGRQ.

This sequence belongs to the TMC family. In terms of assembly, forms the MET channel complosed of TMC dimer (TMC1 or TMC2), TMIE, TOMT, CIB (CIB2 or CIB3), LHFPL5 and PDH15. The interaction of TMC1 and TMC2 with TOMT is required for the transportation of TMC1/2 into the stereocilia of hair cells. Interacts (via N-terminus) with both isoforms CD1 and CD3 of PCDH15. Can form a heterodimer with TMC2, TMC5 or TMC7. As to expression, detected in fetal cochlea, and at low levels in placenta and testis.

The protein localises to the cell membrane. The enzyme catalyses Ca(2+)(in) = Ca(2+)(out). Its function is as follows. Pore-forming subunit of the mechanotransducer (MET) non-selective cation channel complex located at the tips of stereocilia of cochlear hair cells and that mediates sensory transduction in the auditory system. The MET complex is composed of two dimeric pore-forming ion-conducting transmembrane TMC (TMC1 or TMC2) subunits, and aided by several auxiliary proteins including LHFPL5, TMIE, CIB2/3 and TOMT, and the tip-link PCDH15. MET channel is activated by tension in the tip-link extending from the side wall of one stereocilium to the tip of the adjacent shorter stereocilium, where the channel is located. TMC1 MET channel is highly permeable to calcium and likely transports monovalent cations. Also involved in vestibular hair cells transduction current. In Homo sapiens (Human), this protein is Transmembrane channel-like protein 1.